The primary structure comprises 263 residues: Small ribosomal subunit protein uS2 (263 aa).

Residues 228-263 are disordered; it reads QLEEPEADLADEDDNGMTTSDDGDAEALDIPDDSDA. Residues 230-263 show a composition bias toward acidic residues; the sequence is EEPEADLADEDDNGMTTSDDGDAEALDIPDDSDA.

It belongs to the universal ribosomal protein uS2 family.

This is Small ribosomal subunit protein uS2 from Thermosynechococcus vestitus (strain NIES-2133 / IAM M-273 / BP-1).